The chain runs to 571 residues: MRASRFLFATLRETPNDAEVISHQLMLRAGMIRKLASGLYTWLPMGTRVLKKVDAIVREEMNRSGAMEVFMPVTQPASLWEESGRYEQYGPELLRFKDRHDNPFVLGPTHEEVITDLARNELKSYKQLPVNFYQIQTKFRDEIRPRFGVMRSREFIMKDAYSFHATQESLQETYDVMYDTYSRIFTRLGLDFRPVQADTGSIGGSASHEFHVLAASGEDDIAFSTESDYAANVEMAEAVLVGERAAPTQEFKLVETPNQKTIADVCQFLNADPKQSVKALLVQGVADEKGNVPVVALFLRGDHELNEIKAEKHPLVAAPLAFATEEQLQAFGLTAGFTGPQGLVEKGITVIVDRAASVLSDFVAGANEADKHAIGVNWERDAQITEVFDLRNVVEGDPSPDGKGTLQIKRGIEVGHIFQLGTKYSEALGCKVLGEDGKPFTVTMGCYGIGVTRVVAAAIEQNYDDKGIIWPQAIAPFEIAIVPMNAHKSPRTLEAAEALYAELQAQGFDVLLDDRNERPGVKFSDLELMGIPHRIVIGEKGLDAGTFEYKGRRDAEASNLTKEELLAKLAR.

It belongs to the class-II aminoacyl-tRNA synthetase family. ProS type 1 subfamily. In terms of assembly, homodimer.

It localises to the cytoplasm. It catalyses the reaction tRNA(Pro) + L-proline + ATP = L-prolyl-tRNA(Pro) + AMP + diphosphate. Its function is as follows. Catalyzes the attachment of proline to tRNA(Pro) in a two-step reaction: proline is first activated by ATP to form Pro-AMP and then transferred to the acceptor end of tRNA(Pro). As ProRS can inadvertently accommodate and process non-cognate amino acids such as alanine and cysteine, to avoid such errors it has two additional distinct editing activities against alanine. One activity is designated as 'pretransfer' editing and involves the tRNA(Pro)-independent hydrolysis of activated Ala-AMP. The other activity is designated 'posttransfer' editing and involves deacylation of mischarged Ala-tRNA(Pro). The misacylated Cys-tRNA(Pro) is not edited by ProRS. The sequence is that of Proline--tRNA ligase from Acinetobacter baumannii (strain AB307-0294).